A 445-amino-acid polypeptide reads, in one-letter code: GRAM domain-containing protein 2B (445 aa).

M1 bears the N-acetylmethionine mark. The span at 1–10 shows a compositional bias: polar residues; the sequence is MVKKPISSSD. Residues 1–119 are disordered; the sequence is MVKKPISSSD…RKKSSSSSQY (119 aa). Positions 18–37 are enriched in low complexity; the sequence is PSSPKSSAGASHSSTDSPSS. 2 stretches are compositionally biased toward polar residues: residues 56–68 and 82–93; these read KSPTAQSPTSSVE and SKSSFDGSNLLS. Residues 94 to 112 are compositionally biased toward basic and acidic residues; it reads DKNDCKTESKADSKTERKK. The region spanning 123-190 is the GRAM domain; sequence MHFHKLFLDV…FSVTLIKKTK (68 aa). Phosphoserine occurs at positions 238, 255, and 265. The interval 277 to 331 is disordered; the sequence is DLEGYSSSGSQTPESENSRDFHVTESQTVLNVTKGETKPPRTDAHGSRAPDGKAK. Polar residues predominate over residues 281–291; the sequence is YSSSGSQTPES. A compositionally biased stretch (basic and acidic residues) spans 311–330; sequence GETKPPRTDAHGSRAPDGKA.

This is GRAM domain-containing protein 2B (Gramd2b) from Rattus norvegicus (Rat).